Here is a 349-residue protein sequence, read N- to C-terminus: MMNLQGKKITVHDMTLRDGMHPKRHLMTLDQMKSIASGLDAAGVPLIEVTHGDGLGGSSVNYGFPAHSDEEYLGAVIPLMKQAKVSALLLPGIGTVDHLLMAKDLGVHTVRVATHCTEADVSEQHISKARSLEMDTVGFLMMAHMASPEKLVSQALLMEGYGANCIYVTDSAGYMLPDDVTVRLRAVRGALKPETELGFHGHHNLAMGVANSIAAVDAGANRIDAAAAGLGAGAGNTPMEVFIAVCDRMGIATGVDVFRIQDVAEDLVVPIMDHIIRVDRDSLTLGYAGVYSSFLLFAKRAEKKYGVPAREILVELGRRGMVGGQEDMIEDTAMTLARERAAAAHKAAA.

One can recognise a Pyruvate carboxyltransferase domain in the interval 9-261 (ITVHDMTLRD…ATGVDVFRIQ (253 aa)). 17–18 (RD) serves as a coordination point for substrate. Position 18 (Asp-18) interacts with Mn(2+). His-21 functions as the Proton acceptor in the catalytic mechanism. 2 residues coordinate substrate: Ser-171 and His-200. Residues His-200 and His-202 each coordinate Mn(2+). A substrate-binding site is contributed by Tyr-291.

It belongs to the 4-hydroxy-2-oxovalerate aldolase family.

It catalyses the reaction (S)-4-hydroxy-2-oxopentanoate = acetaldehyde + pyruvate. The polypeptide is 4-hydroxy-2-oxovalerate aldolase 1 (Methylibium petroleiphilum (strain ATCC BAA-1232 / LMG 22953 / PM1)).